The following is a 421-amino-acid chain: Enolase (421 aa).

Glu-207 serves as the catalytic Proton donor. 3 residues coordinate Mg(2+): Asp-244, Glu-285, and Asp-312. Lys-337 serves as the catalytic Proton acceptor. The (2R)-2-phosphoglycerate site is built by Lys-337, Arg-366, Ser-367, and Lys-388.

It belongs to the enolase family. It depends on Mg(2+) as a cofactor.

It is found in the cytoplasm. It localises to the secreted. Its subcellular location is the cell surface. It catalyses the reaction (2R)-2-phosphoglycerate = phosphoenolpyruvate + H2O. The protein operates within carbohydrate degradation; glycolysis; pyruvate from D-glyceraldehyde 3-phosphate: step 4/5. Functionally, catalyzes the reversible conversion of 2-phosphoglycerate (2-PG) into phosphoenolpyruvate (PEP). It is essential for the degradation of carbohydrates via glycolysis. This is Enolase from Ehrlichia ruminantium (strain Gardel).